Reading from the N-terminus, the 317-residue chain is L-lactate dehydrogenase (317 aa).

NAD(+)-binding positions include valine 16, aspartate 37, arginine 42, tyrosine 67, and 81–82 (GA). Residues glutamine 84 and arginine 90 each coordinate substrate. Residues serine 103, 120 to 122 (AAN), and serine 145 contribute to the NAD(+) site. 122–125 (NPVD) provides a ligand contact to substrate. Substrate is bound at residue 150-153 (DSAR). The active-site Proton acceptor is the histidine 177. Tyrosine 221 is subject to Phosphotyrosine. A substrate-binding site is contributed by threonine 230.

Belongs to the LDH/MDH superfamily. LDH family. As to quaternary structure, homotetramer.

It is found in the cytoplasm. It carries out the reaction (S)-lactate + NAD(+) = pyruvate + NADH + H(+). It functions in the pathway fermentation; pyruvate fermentation to lactate; (S)-lactate from pyruvate: step 1/1. Its function is as follows. Catalyzes the conversion of lactate to pyruvate. In Limosilactobacillus fermentum (strain NBRC 3956 / LMG 18251) (Lactobacillus fermentum), this protein is L-lactate dehydrogenase.